Here is a 135-residue protein sequence, read N- to C-terminus: Galectin-1 (135 aa).

An N-acetylalanine modification is found at Ala-2. Positions 4–135 (GLVASNLNLK…DFKIKCVAFE (132 aa)) constitute a Galectin domain. N6-acetyllysine occurs at positions 13, 19, and 29. Phosphoserine is present on Ser-30. A beta-D-galactoside contacts are provided by residues 45-49 (HFNPR), His-53, Asn-62, and 69-72 (WGTE). An N6-acetyllysine; alternate modification is found at Lys-108. At Lys-108 the chain carries N6-succinyllysine; alternate. An N6-acetyllysine modification is found at Lys-128.

As to quaternary structure, homodimer. Binds LGALS3BP. Interacts with CD2, CD3, CD4, CD6, CD7, CD43, ALCAM and CD45. Interacts with laminin (via poly-N-acetyllactosamine). Interacts with SUSD2. Interacts with cargo receptor TMED10; the interaction mediates the translocation from the cytoplasm into the ERGIC (endoplasmic reticulum-Golgi intermediate compartment) and thereby secretion. Interacts with CD69.

The protein resides in the secreted. The protein localises to the extracellular space. It localises to the extracellular matrix. It is found in the cytoplasm. Its function is as follows. Lectin that binds beta-galactoside and a wide array of complex carbohydrates. Plays a role in regulating apoptosis, cell proliferation and cell differentiation. Inhibits CD45 protein phosphatase activity and therefore the dephosphorylation of Lyn kinase. Strong inducer of T-cell apoptosis. Plays a negative role in Th17 cell differentiation via activation of the receptor CD69. The sequence is that of Galectin-1 (Lgals1) from Mus musculus (Mouse).